Reading from the N-terminus, the 184-residue chain is Uroplakin-2 (184 aa).

The first 25 residues, 1-25 (MAPLLPIRTLPLILILLALLSPGAA), serve as a signal peptide directing secretion. Residues 26–84 (DFNISSLSGLLSPALTESLLVALPPCHLTGGNATLMVRRANDSKVVTSSFVVPPCRGRR) constitute a propeptide that is removed on maturation. Residues Asn28, Asn57, and Asn66 are each glycosylated (N-linked (GlcNAc...) asparagine). The Lumenal segment spans residues 85-155 (ELVSVVDSGA…IGLGMARTGG (71 aa)). Residues 156 to 176 (MVVITVLLSVAMFLLVLGFII) form a helical membrane-spanning segment. Over 177 to 184 (ALALGSRK) the chain is Cytoplasmic.

It belongs to the uroplakin-2 family. Interacts with uroplakin-1a (UPK1A). Expressed in ureter.

It localises to the cell membrane. In terms of biological role, component of the asymmetric unit membrane (AUM); a highly specialized biomembrane elaborated by terminally differentiated urothelial cells. May play an important role in regulating the assembly of the AUM. This Homo sapiens (Human) protein is Uroplakin-2 (UPK2).